Reading from the N-terminus, the 601-residue chain is Glutathione-regulated potassium-efflux system protein KefB (601 aa).

The next 13 membrane-spanning stretches (helical) occupy residues 4–24 (ADLLTAGVLFLFAAVAAVPLA), 29–49 (IGAVLGYLLAGIAIGPWGLGF), 55–75 (EILHFSELGVVFLMFIIGLEL), 87–107 (IFGVGAAQVLLSAAVLAGLLM), 111–131 (FLWQAAVVGGIGLAMSSTAMA), 152–172 (VLLFQDLAVIPALALVPLLAG), 177–197 (HFDWFKVAMKVLAFAVMLIGG), 207–227 (FIAASGVREVFTAATLLLVLS), 230–250 (LFMDALGLSMALGTFIAGVLL), 262–282 (AIDPFKGLLLGLFFISVGMSL), 284–304 (LGVLYTHLLWVAASVVILVVI), 324–344 (MQFASVLSQGGEFAFVLFSTA), and 356–376 (ALLLVTVTLSMMTTPLLMKGI). Residues 400 to 519 (KPQVIVVGFG…AGVTQFSRET (120 aa)) form the RCK N-terminal domain.

This sequence belongs to the monovalent cation:proton antiporter 2 (CPA2) transporter (TC 2.A.37) family. KefB subfamily. In terms of assembly, interacts with the regulatory subunit KefG.

Its subcellular location is the cell inner membrane. In terms of biological role, pore-forming subunit of a potassium efflux system that confers protection against electrophiles. Catalyzes K(+)/H(+) antiport. The sequence is that of Glutathione-regulated potassium-efflux system protein KefB from Salmonella paratyphi B (strain ATCC BAA-1250 / SPB7).